The chain runs to 142 residues: Lipoprotein MlpI (142 aa).

Positions 1–17 are cleaved as a signal peptide; it reads MKIINILFCLFLLMLNS. Residue Cys-18 is the site of N-palmitoyl cysteine attachment. Cys-18 carries the S-diacylglycerol cysteine lipid modification. The disordered stretch occupies residues 22–54; that stretch reads DTNTSQTKSRQKRDLTQKEATQEKPKSKEDLLR. Residues 33 to 54 show a composition bias toward basic and acidic residues; sequence KRDLTQKEATQEKPKSKEDLLR.

Belongs to the Multicopy lipoprotein (Mlp) family.

The protein localises to the cell outer membrane. Functionally, an outer membrane protein that may participate in pathogenesis. Some human Lyme disease patients have antibodies against this protein. The Mlp proteins probably undergo intragenic recombination, generating new alleles. The polypeptide is Lipoprotein MlpI (Borreliella burgdorferi (strain ATCC 35210 / DSM 4680 / CIP 102532 / B31) (Borrelia burgdorferi)).